Consider the following 271-residue polypeptide: Aminodeoxychorismate lyase (271 aa).

An N6-(pyridoxal phosphate)lysine modification is found at lysine 140.

The protein belongs to the class-IV pyridoxal-phosphate-dependent aminotransferase family. Homodimer. It depends on pyridoxal 5'-phosphate as a cofactor.

The enzyme catalyses 4-amino-4-deoxychorismate = 4-aminobenzoate + pyruvate + H(+). It participates in cofactor biosynthesis; tetrahydrofolate biosynthesis; 4-aminobenzoate from chorismate: step 2/2. Involved in the biosynthesis of p-aminobenzoate (PABA), a precursor of tetrahydrofolate. Converts 4-amino-4-deoxychorismate into 4-aminobenzoate (PABA) and pyruvate. In Vibrio harveyi (Beneckea harveyi), this protein is Aminodeoxychorismate lyase (pabC).